A 306-amino-acid polypeptide reads, in one-letter code: tRNA pseudouridine synthase B (306 aa).

The Nucleophile role is filled by aspartate 47.

This sequence belongs to the pseudouridine synthase TruB family. Type 1 subfamily.

The catalysed reaction is uridine(55) in tRNA = pseudouridine(55) in tRNA. Its function is as follows. Responsible for synthesis of pseudouridine from uracil-55 in the psi GC loop of transfer RNAs. In Neisseria meningitidis serogroup A / serotype 4A (strain DSM 15465 / Z2491), this protein is tRNA pseudouridine synthase B.